The sequence spans 627 residues: tRNA uridine 5-carboxymethylaminomethyl modification enzyme MnmG (627 aa).

Residues 13–18, Val-125, and Ser-180 contribute to the FAD site; that span reads GGGHAG. An NAD(+)-binding site is contributed by 274 to 288; that stretch reads GPRYCPSIEDKVVRF. Residue Gln-371 participates in FAD binding.

Belongs to the MnmG family. As to quaternary structure, homodimer. Heterotetramer of two MnmE and two MnmG subunits. FAD serves as cofactor.

The protein localises to the cytoplasm. Its function is as follows. NAD-binding protein involved in the addition of a carboxymethylaminomethyl (cmnm) group at the wobble position (U34) of certain tRNAs, forming tRNA-cmnm(5)s(2)U34. This chain is tRNA uridine 5-carboxymethylaminomethyl modification enzyme MnmG, found in Francisella tularensis subsp. tularensis (strain WY96-3418).